Consider the following 377-residue polypeptide: Erythronate-4-phosphate dehydrogenase (377 aa).

Ser45 and Thr67 together coordinate substrate. Residues Asp147, Ala210 to Arg212, and Asp236 contribute to the NAD(+) site. Residue Arg212 is part of the active site. The active site involves Glu241. The active-site Proton donor is His258. Gly261 contacts NAD(+). Tyr262 contributes to the substrate binding site.

Belongs to the D-isomer specific 2-hydroxyacid dehydrogenase family. PdxB subfamily. Homodimer.

Its subcellular location is the cytoplasm. The enzyme catalyses 4-phospho-D-erythronate + NAD(+) = (R)-3-hydroxy-2-oxo-4-phosphooxybutanoate + NADH + H(+). Its pathway is cofactor biosynthesis; pyridoxine 5'-phosphate biosynthesis; pyridoxine 5'-phosphate from D-erythrose 4-phosphate: step 2/5. Catalyzes the oxidation of erythronate-4-phosphate to 3-hydroxy-2-oxo-4-phosphonooxybutanoate. The protein is Erythronate-4-phosphate dehydrogenase of Aeromonas salmonicida (strain A449).